Consider the following 235-residue polypeptide: Orotidine 5'-phosphate decarboxylase (235 aa).

Substrate contacts are provided by residues Asp10, Lys33, 60 to 69, Thr123, Arg185, Gln194, Gly214, and Arg215; that span reads DLKMSDIPNT. The active-site Proton donor is Lys62.

Belongs to the OMP decarboxylase family. Type 1 subfamily. Homodimer.

The catalysed reaction is orotidine 5'-phosphate + H(+) = UMP + CO2. It functions in the pathway pyrimidine metabolism; UMP biosynthesis via de novo pathway; UMP from orotate: step 2/2. Functionally, catalyzes the decarboxylation of orotidine 5'-monophosphate (OMP) to uridine 5'-monophosphate (UMP). The protein is Orotidine 5'-phosphate decarboxylase of Lactobacillus gasseri (strain ATCC 33323 / DSM 20243 / BCRC 14619 / CIP 102991 / JCM 1131 / KCTC 3163 / NCIMB 11718 / NCTC 13722 / AM63).